The chain runs to 314 residues: MCVPSTPQPPVIGRFAPSPTGPLHVGSLVAAVASYAMARRQGGLWLVRMEDLDTPRVVPGMADDILRTLECLGFDWDGDIMRQSRRADAYGAALQRLLAAGHAYPCGCSRAEIARAATAPHDGDGEIPYPNLCRRGLPPGKEPRSFRVRVPAEPVEFTDLVMGPQHHDLPAMCGDFVIKRADGLFAYQLAVVVDDEAQGVTQVVRGADLLSSTPRQIVLQRLLGFDTPVYAHVPLVTGPGGGKLSKRDNALSLAAGRDLTREGGMLLLAALRFLGQSPPAELAGASGARVLRWAAGNFEPSAIPTAAAPFHASP.

Residues 14–18 (RFAPS) and glutamate 50 contribute to the L-glutamate site. The 'HIGH' region motif lies at 17–27 (PSPTGPLHVGS). Residues cysteine 106, cysteine 108, tyrosine 129, and cysteine 133 each contribute to the Zn(2+) site. Tyrosine 187 and arginine 205 together coordinate L-glutamate. Residues 243 to 247 (KLSKR) carry the 'KMSKS' region motif. Lysine 246 is a binding site for ATP.

This sequence belongs to the class-I aminoacyl-tRNA synthetase family. GluQ subfamily. The cofactor is Zn(2+).

Catalyzes the tRNA-independent activation of glutamate in presence of ATP and the subsequent transfer of glutamate onto a tRNA(Asp). Glutamate is transferred on the 2-amino-5-(4,5-dihydroxy-2-cyclopenten-1-yl) moiety of the queuosine in the wobble position of the QUC anticodon. The protein is Glutamyl-Q tRNA(Asp) synthetase of Geobacter sulfurreducens (strain ATCC 51573 / DSM 12127 / PCA).